We begin with the raw amino-acid sequence, 1213 residues long: MVDVNRFKSMQITLASPSKVRSWSYGEVKKPETINYRTLKPEREGLFDEVIFGPTKDWECACGKYKRIRYKGIVCDRCGVEVTRAKVRRERMGHIELKAPVSHIWYFKGIPSRMGLTLDMSPRALEEVIYFAAYVVIDPKDTPLEPKSLLTEREYREKLQEYGHGSFVAKMGAEAIQDLLKRVDLAAEIAELKEELKSASGQKRIKAVRRLDVLDAFNKSGNKPEWMVLNILPVIPPDLRPMVQLDGGRFAASDLNDLYRRVINRNNRLARLLELNAPGIIVQNEKRMLQEAVDALIDNGRRGRPITGPGSRPLKSLSHMLKGKQGRFRQNLLGKRVDFSGRSVIAVGPTLKMYQCGVPREMAIELFKPFVMREIVAKEYAGNVKAAKRMVERGDERIWDILEEVIKEHPVLLNRAPTLHRLGIQAFEPVLIDGKALRLHPLVCEAYNADFDGDQMAIHVPLSEEAQAEARLLMLAAEHILNPKDGKPVVTPSQDMVLGNYYLTMEDAGREGEGMIFKDKDEAVMAYRNGYAHLHSRVGIAVDSMPNKPWKDSQRHKIMVTTVGKILFNDIMPEDLPYLQEPNNANLTEGTPDKYFLEPGQDIQEVIDGLEINVPFKKKNLGNIIAETFKRFRTTETSAFLDRLKDLGYYHSTLAGLTVGIADIPVIDNKAEIIDAAHHRVEEINKAFRRGLMTDDDRYVAVTTTWREAKEALEKRLIETQDPKNPIVMMMDSGARGNISNFSQLAGMRGLMAAPNGRIMELPILSNFREGLSVLEMFFSTHGARKGMTDTALKTADSGYLTRRLVDVAQDVIIREDDCGTDRGLLIRAITDGKEVTETLEERLQGRYTRKSVKHPETGEVLIGADQLITEDMARKIVDAGVEEVTIRSVFTCATRHGVCRHCYGINLATGDAVEVGEAVGTIAAQSIGEPGTQLTMRTFHTGGVASNTDITQGLPRIQEIFEARNPKGEAVITEVKGNVVEIEEDASTRTKKVYVQGKTGMGEYVVPFTARMKVEVGDEVNRGAALTEGSIQPKRLLEVRDTLSVETYLLAEVQKVYRSQGVEIGDKHVEVMVRQMLRKVRVMDPGDTDLLPGTLMDISDFTDANKDIVISGGIPATSRPVLMGITKASLETNSFLSAASFQETTRVLTDAAIRGKKDHLLGLKENVIIGKIIPAGTGMARYRNIEPQAMNEIEVIDHTEVSAEAVFTAEAE.

Zn(2+) contacts are provided by C60, C62, C75, and C78. Positions 450, 452, and 454 each coordinate Mg(2+). Positions 819, 893, 900, and 903 each coordinate Zn(2+).

It belongs to the RNA polymerase beta' chain family. As to quaternary structure, the RNAP catalytic core consists of 2 alpha, 1 beta, 1 beta' and 1 omega subunit. When a sigma factor is associated with the core the holoenzyme is formed, which can initiate transcription. Mg(2+) serves as cofactor. Zn(2+) is required as a cofactor.

It catalyses the reaction RNA(n) + a ribonucleoside 5'-triphosphate = RNA(n+1) + diphosphate. DNA-dependent RNA polymerase catalyzes the transcription of DNA into RNA using the four ribonucleoside triphosphates as substrates. This chain is DNA-directed RNA polymerase subunit beta', found in Streptococcus pyogenes serotype M4 (strain MGAS10750).